Consider the following 234-residue polypeptide: Large ribosomal subunit protein uL1 (234 aa).

It belongs to the universal ribosomal protein uL1 family. As to quaternary structure, part of the 50S ribosomal subunit.

Binds directly to 23S rRNA. The L1 stalk is quite mobile in the ribosome, and is involved in E site tRNA release. In terms of biological role, protein L1 is also a translational repressor protein, it controls the translation of the L11 operon by binding to its mRNA. This chain is Large ribosomal subunit protein uL1, found in Vibrio atlanticus (strain LGP32) (Vibrio splendidus (strain Mel32)).